Here is an 861-residue protein sequence, read N- to C-terminus: ToMV susceptible protein tm-2 (861 aa).

Residues 63 to 83 (VKNLLKDIQELAGDVEDLLDD) adopt a coiled-coil conformation. Residues 162–388 (DDFNMLQAKL…LESMGHKVQD (227 aa)) enclose the NB-ARC domain. 185 to 192 (GMPGLGKT) contributes to the ATP binding site. LRR repeat units lie at residues 225–248 (LDIA…NLRS), 305–327 (LHAL…IFNF), 388–411 (DGCA…CFLY), 449–472 (LAED…TYNG), 510–536 (VARL…KLEK), 585–608 (MTCL…IVKL), 609–631 (TRLE…VWES), 652–680 (ISSF…FFEP), 689–713 (LRKL…PVPK), 735–758 (YPKI…AFPP), 781–804 (LPKL…LSGE), and 810–835 (FPQL…DVSM).

The protein belongs to the disease resistance NB-LRR family. In terms of assembly, (Microbial infection) Fails to interact with the tobamovirus mouvement protein of tobacco mosaic virus (TMV).

It localises to the cell membrane. Potential inhibitor of viral mouvements which may confer resistance to some tobamoviruses but not to the tomato mosaic virus (ToMV) and tobacco mosaic virus (TMV). This chain is ToMV susceptible protein tm-2, found in Solanum lycopersicum (Tomato).